Here is a 212-residue protein sequence, read N- to C-terminus: Pyridoxine/pyridoxamine 5'-phosphate oxidase (212 aa).

Residues 8-11 and K66 each bind substrate; that span reads RRNY. Residues 61–66, 76–77, R82, K83, and Q105 each bind FMN; these read RIVLLK and FT. Residues Y123, R127, and S131 each contribute to the substrate site. FMN contacts are provided by residues 140–141 and W184; that span reads QS. A substrate-binding site is contributed by 190-192; sequence RLH. An FMN-binding site is contributed by R194.

Belongs to the pyridoxamine 5'-phosphate oxidase family. As to quaternary structure, homodimer. It depends on FMN as a cofactor.

It carries out the reaction pyridoxamine 5'-phosphate + O2 + H2O = pyridoxal 5'-phosphate + H2O2 + NH4(+). The enzyme catalyses pyridoxine 5'-phosphate + O2 = pyridoxal 5'-phosphate + H2O2. The protein operates within cofactor metabolism; pyridoxal 5'-phosphate salvage; pyridoxal 5'-phosphate from pyridoxamine 5'-phosphate: step 1/1. It participates in cofactor metabolism; pyridoxal 5'-phosphate salvage; pyridoxal 5'-phosphate from pyridoxine 5'-phosphate: step 1/1. Functionally, catalyzes the oxidation of either pyridoxine 5'-phosphate (PNP) or pyridoxamine 5'-phosphate (PMP) into pyridoxal 5'-phosphate (PLP). The chain is Pyridoxine/pyridoxamine 5'-phosphate oxidase from Cupriavidus metallidurans (strain ATCC 43123 / DSM 2839 / NBRC 102507 / CH34) (Ralstonia metallidurans).